A 100-amino-acid chain; its full sequence is Putative pterin-4-alpha-carbinolamine dehydratase (100 aa).

This sequence belongs to the pterin-4-alpha-carbinolamine dehydratase family.

The catalysed reaction is (4aS,6R)-4a-hydroxy-L-erythro-5,6,7,8-tetrahydrobiopterin = (6R)-L-erythro-6,7-dihydrobiopterin + H2O. In Bradyrhizobium sp. (strain ORS 278), this protein is Putative pterin-4-alpha-carbinolamine dehydratase.